A 489-amino-acid chain; its full sequence is MTFRNCVAVDLGASSGRVMLARYERECRSLTLREIHRFKNGLHSQNGYVTWDVDSLESAIRLGLNKVCEEGIRIDSIGIDTWGVDFVLLDLQGKRVGLPVAYRDSRTNGLMTQAQQQLGKRDIYQRSGIQFLPFNTLYQLRALTEQQPELIPHIAHALLMPDYFSYRLTGKMNWEYTNATTTQLVNINSDDWDESLLAWSGANKAWFGHPTHPGNVIGHWICPQGNEIPVVAVASHDTASAVIASPLNGSRAAYLSSGTWSLMGFESQTPFTNDTALAANITNEGGAEGRYRVLKNIMGLWLLQRVLQERQINDLPALIAATQALPACRFTINPNDDRFINPDEMCSEIQAACRETAQPIPESDAELARCIFDSLALLYADVLHELAQLRGEDFSQLHIVGGGCQNALLNQLCADACGIRVIAGPVEASTLGNIGIQLMTLDELNNVDDFRQVVSTTANLTTFTPNPDSEIAHYVAQIHSTRQTKELCA.

An ATP-binding site is contributed by 13–17 (ASSGR). Cysteine 68 and cysteine 222 are joined by a disulfide. Substrate contacts are provided by residues glycine 83 and 236-238 (HDT). The active-site Proton acceptor is the aspartate 237. Position 259 (threonine 259) interacts with ATP. Asparagine 296 provides a ligand contact to substrate. Glutamine 304 is a binding site for ATP. A disulfide bridge connects residues cysteine 353 and cysteine 370. Glycine 402 lines the ATP pocket. Cysteine 413 and cysteine 417 are joined by a disulfide.

It belongs to the rhamnulokinase family. As to quaternary structure, monomer. Mg(2+) is required as a cofactor.

It carries out the reaction L-rhamnulose + ATP = L-rhamnulose 1-phosphate + ADP + H(+). It functions in the pathway carbohydrate degradation; L-rhamnose degradation; glycerone phosphate from L-rhamnose: step 2/3. Its function is as follows. Involved in the catabolism of L-rhamnose (6-deoxy-L-mannose). Catalyzes the transfer of the gamma-phosphate group from ATP to the 1-hydroxyl group of L-rhamnulose to yield L-rhamnulose 1-phosphate. In Escherichia coli O7:K1 (strain IAI39 / ExPEC), this protein is Rhamnulokinase.